The primary structure comprises 347 residues: Ion-translocating oxidoreductase complex subunit D (347 aa).

Helical transmembrane passes span 15–35, 36–56, 84–104, and 114–134; these read IMFLVIVACLPGIFAKYYFFG, IGTLIQIFFSIFISLVLEIII, IPPLLPWWMTSIGLFFAIVVA, and NIFNPAMVGYAVLLISFPVYM. Thr182 carries the FMN phosphoryl threonine modification. The next 5 helical transmembrane spans lie at 217 to 237, 239 to 259, 261 to 281, 289 to 309, and 315 to 335; these read CINISFFLGGIFLLFTKIICW, IPISFLSSLGMLSIITYFYSK, LFMSPQVHFFSGGTMICAFFI, ACNNVGKIVFGIIIGFLVWII, and YPDAIAFSVLFANMTVPLVDY.

The protein belongs to the NqrB/RnfD family. As to quaternary structure, the complex is composed of six subunits: RnfA, RnfB, RnfC, RnfD, RnfE and RnfG. Requires FMN as cofactor.

Its subcellular location is the cell inner membrane. Part of a membrane-bound complex that couples electron transfer with translocation of ions across the membrane. This is Ion-translocating oxidoreductase complex subunit D from Buchnera aphidicola subsp. Acyrthosiphon pisum (strain 5A).